Consider the following 655-residue polypeptide: p-hydroxybenzoic acid efflux pump subunit AaeB (655 aa).

11 helical membrane-spanning segments follow: residues 13–33, 38–58, 69–89, 93–113, 121–141, 152–172, 370–390, 407–427, 431–451, 459–479, and 482–502; these read FAVK…HFQL, WAVL…GGEP, LRII…ITMI, LLMI…SSLV, WGLS…EPLL, EIVI…PRSV, LFWL…IAVV, FIYG…VIIP, QSML…GIEV, MGAL…TFHF, and FLDS…VILL.

Belongs to the aromatic acid exporter ArAE (TC 2.A.85) family.

It is found in the cell inner membrane. In terms of biological role, forms an efflux pump with AaeA. Could function as a metabolic relief valve, allowing to eliminate certain compounds when they accumulate to high levels in the cell. This Citrobacter koseri (strain ATCC BAA-895 / CDC 4225-83 / SGSC4696) protein is p-hydroxybenzoic acid efflux pump subunit AaeB.